Consider the following 126-residue polypeptide: Large ribosomal subunit protein bL12c (126 aa).

Belongs to the bacterial ribosomal protein bL12 family. In terms of assembly, homodimer. Part of the ribosomal stalk of the 50S ribosomal subunit. Forms a multimeric L10(L12)X complex, where L10 forms an elongated spine to which 2 to 4 L12 dimers bind in a sequential fashion. Binds GTP-bound translation factors.

Its subcellular location is the plastid. It localises to the cyanelle. Its function is as follows. Forms part of the ribosomal stalk which helps the ribosome interact with GTP-bound translation factors. Is thus essential for accurate translation. This is Large ribosomal subunit protein bL12c from Cyanophora paradoxa.